A 435-amino-acid polypeptide reads, in one-letter code: Dual specificity protein kinase FUZ7 (435 aa).

The tract at residues 1–61 (MLSSGAGSSI…TIGKSSAVTP (61 aa)) is disordered. The segment covering 46–59 (AASNASTIGKSSAV) has biased composition (polar residues). Positions 109–417 (LKTLSELGAG…PKDLTKHQYV (309 aa)) constitute a Protein kinase domain. Residues 115–123 (LGAGNGGTV) and K138 each bind ATP. Residue D231 is the Proton acceptor of the active site. The segment at 307 to 359 (NEEDDDSDADNNYTNEDLAGTLSPTKPAPMISLGQNEKQRRRKSKPAGVSLEG) is disordered.

It belongs to the protein kinase superfamily. STE Ser/Thr protein kinase family. MAP kinase kinase subfamily.

It catalyses the reaction L-seryl-[protein] + ATP = O-phospho-L-seryl-[protein] + ADP + H(+). The catalysed reaction is L-threonyl-[protein] + ATP = O-phospho-L-threonyl-[protein] + ADP + H(+). It carries out the reaction L-tyrosyl-[protein] + ATP = O-phospho-L-tyrosyl-[protein] + ADP + H(+). Its function is as follows. Protein kinase that is necessary for a-locus-dependent processes, such as conjugation tube formation, filament formation, and maintenance of filamentous growth, and for a-locus-independent processes, such as tumor induction and teliospore germination. The sequence is that of Dual specificity protein kinase FUZ7 (FUZ7) from Mycosarcoma maydis (Corn smut fungus).